Consider the following 183-residue polypeptide: Putative manganese efflux pump MntP (183 aa).

The next 6 helical transmembrane spans lie at 6–26, 40–60, 64–84, 101–121, 135–155, and 158–178; these read LFLIAIALSLDAFGVALCIGL, IYFGFFQFLFAIIGGYAGFLF, IATMPQIVGGVVICIVGIIMI, MNIILGISVSIDAMVVGFTAL, LFIGIVTLFVSILAFITSKYL, and IDVIGKYADYIGGIILIFFGL.

This sequence belongs to the MntP (TC 9.B.29) family.

It localises to the cell membrane. Probably functions as a manganese efflux pump. The polypeptide is Putative manganese efflux pump MntP (Clostridium tetani (strain Massachusetts / E88)).